The chain runs to 474 residues: Polyamine oxidase 7 (474 aa).

The signal sequence occupies residues 1–27 (MTKPTTMAIFLSIVLLSMAQLPSLVAG). Positions 61 and 69 each coordinate FAD. Asparagine 103 and asparagine 150 each carry an N-linked (GlcNAc...) asparagine glycan. Valine 261 contacts FAD. Residue asparagine 278 is glycosylated (N-linked (GlcNAc...) asparagine). Glutamate 454 serves as a coordination point for FAD.

The protein belongs to the flavin monoamine oxidase family. The cofactor is FAD.

The protein resides in the secreted. The protein localises to the extracellular space. It localises to the apoplast. It catalyses the reaction spermine + O2 + H2O = 3-aminopropanal + spermidine + H2O2. The catalysed reaction is N(1)-acetylspermine + O2 + H2O = 3-acetamidopropanal + spermidine + H2O2. It carries out the reaction norspermine + O2 + H2O = norspermidine + 3-aminopropanal + H2O2. The enzyme catalyses spermidine + O2 + H2O = 3-aminopropanal + putrescine + H2O2. It catalyses the reaction N(1)-acetylspermidine + O2 + H2O = 3-acetamidopropanal + putrescine + H2O2. The catalysed reaction is thermospermine + O2 + H2O = 3-aminopropanal + spermidine + H2O2. Its pathway is amine and polyamine degradation; spermidine degradation. It participates in amine and polyamine degradation; spermine degradation. Flavoenzyme involved in polyamine back-conversion. Catalyzes the oxidation of the secondary amino group of polyamines, such as spermine, spermidine and their acetyl derivatives. Substrate preference is spermine &gt; spermidine &gt; N(1)-acetylspermine &gt; N(1)-acetylspermidine &gt; norspermine &gt; thermospermine. No activity detected when putrescine is used as substrate. May play a role in producing hydrogen peroxide for secondary wall thickening through lignin formation during anther development. The sequence is that of Polyamine oxidase 7 from Oryza sativa subsp. japonica (Rice).